Reading from the N-terminus, the 215-residue chain is Probable serine/threonine-protein kinase 2 (215 aa).

The region spanning 1 to 205 is the Protein kinase domain; it reads MKPEQLVYLN…WLLKEMEQLL (205 aa).

The protein belongs to the protein kinase superfamily. Ser/Thr protein kinase family. In terms of assembly, interacts with the kinase domain of host EIF2AK2.

The protein localises to the host cytoplasm. The catalysed reaction is L-seryl-[protein] + ATP = O-phospho-L-seryl-[protein] + ADP + H(+). The enzyme catalyses L-threonyl-[protein] + ATP = O-phospho-L-threonyl-[protein] + ADP + H(+). Functionally, plays a role in the inhibition of host eIF2alpha/EIF2S1 phosphorylation, thereby increasing viral fitness. In the insect host, targets the endogenous insect heme-regulated inhibitor (HRI)-like eIF2alpha kinase. This is Probable serine/threonine-protein kinase 2 (PK2) from Autographa californica nuclear polyhedrosis virus (AcMNPV).